A 66-amino-acid chain; its full sequence is Cold shock protein CspB (66 aa).

The 60-residue stretch at 4 to 63 folds into the CSD domain; it reads GKVKWFNNEKGYGFIEVEGGSDVFVHFTAIQGEGFKSLEEGQEVSFEIVQGNRGPQAANV.

As to quaternary structure, homodimer.

It is found in the cytoplasm. Its function is as follows. Affects cell viability at low temperatures. This chain is Cold shock protein CspB (cspB), found in Geobacillus stearothermophilus (Bacillus stearothermophilus).